Consider the following 158-residue polypeptide: Crossover junction endodeoxyribonuclease RuvC (158 aa).

Residues aspartate 7, glutamate 67, and aspartate 140 contribute to the active site. Positions 7, 67, and 140 each coordinate Mg(2+).

Belongs to the RuvC family. In terms of assembly, homodimer which binds Holliday junction (HJ) DNA. The HJ becomes 2-fold symmetrical on binding to RuvC with unstacked arms; it has a different conformation from HJ DNA in complex with RuvA. In the full resolvosome a probable DNA-RuvA(4)-RuvB(12)-RuvC(2) complex forms which resolves the HJ. The cofactor is Mg(2+).

It is found in the cytoplasm. The enzyme catalyses Endonucleolytic cleavage at a junction such as a reciprocal single-stranded crossover between two homologous DNA duplexes (Holliday junction).. Functionally, the RuvA-RuvB-RuvC complex processes Holliday junction (HJ) DNA during genetic recombination and DNA repair. Endonuclease that resolves HJ intermediates. Cleaves cruciform DNA by making single-stranded nicks across the HJ at symmetrical positions within the homologous arms, yielding a 5'-phosphate and a 3'-hydroxyl group; requires a central core of homology in the junction. The consensus cleavage sequence is 5'-(A/T)TT(C/G)-3'. Cleavage occurs on the 3'-side of the TT dinucleotide at the point of strand exchange. HJ branch migration catalyzed by RuvA-RuvB allows RuvC to scan DNA until it finds its consensus sequence, where it cleaves and resolves the cruciform DNA. The polypeptide is Crossover junction endodeoxyribonuclease RuvC (Dictyoglomus turgidum (strain DSM 6724 / Z-1310)).